Here is a 291-residue protein sequence, read N- to C-terminus: MFHIPVMPLETSRYLIGKPGGLYVDCTFGGGGHALYLLDKFKDIKIVAFDWDEDSSKRFIEREKEFSGRVTFIRDNFKNVKKALSALNISKVDGILADIGVSSKQFGDLDRGFSFNSGTLDMRMDKRNGFEAKEVVNSYSYEDLADIFYKYGEERKSRQIASAILLRRKRGIINTASELQTVICSVKRPEGRINPATKVFQALRIFVNSELENLAVLLSDAPELLNAGGRTVIISFHSLEDRIVKQNFKRNSECGIYKILTKKVVTALKEEVKINPGSRSARIRAAEKTSV.

Residues 31–33 (GGH), Asp-50, Phe-77, Asp-98, and Gln-105 contribute to the S-adenosyl-L-methionine site.

This sequence belongs to the methyltransferase superfamily. RsmH family.

The protein localises to the cytoplasm. It catalyses the reaction cytidine(1402) in 16S rRNA + S-adenosyl-L-methionine = N(4)-methylcytidine(1402) in 16S rRNA + S-adenosyl-L-homocysteine + H(+). Specifically methylates the N4 position of cytidine in position 1402 (C1402) of 16S rRNA. The polypeptide is Ribosomal RNA small subunit methyltransferase H (Endomicrobium trichonymphae).